The chain runs to 183 residues: Large ribosomal subunit protein uL5 (183 aa).

It belongs to the universal ribosomal protein uL5 family. Part of the 50S ribosomal subunit; part of the 5S rRNA/L5/L18/L25 subcomplex. Contacts the 5S rRNA and the P site tRNA. Forms a bridge to the 30S subunit in the 70S ribosome.

Its function is as follows. This is one of the proteins that bind and probably mediate the attachment of the 5S RNA into the large ribosomal subunit, where it forms part of the central protuberance. In the 70S ribosome it contacts protein S13 of the 30S subunit (bridge B1b), connecting the 2 subunits; this bridge is implicated in subunit movement. Contacts the P site tRNA; the 5S rRNA and some of its associated proteins might help stabilize positioning of ribosome-bound tRNAs. The polypeptide is Large ribosomal subunit protein uL5 (Chlorobaculum tepidum (strain ATCC 49652 / DSM 12025 / NBRC 103806 / TLS) (Chlorobium tepidum)).